A 664-amino-acid polypeptide reads, in one-letter code: DCC-interacting protein 13-beta (664 aa).

The tract at residues 1–428 (MPAVDKLLLE…NSEMENENDK (428 aa)) is required for RAB5A binding. Residues 3-268 (AVDKLLLEEA…ESVYTPDSDV (266 aa)) form the BAR domain. In terms of domain architecture, PH spans 277–375 (LIQKAGYLNL…WICAINNISR (99 aa)). The PID domain occupies 488-637 (SLLQQMFIVR…LMLSIPLTND (150 aa)). Residues 643–664 (LNDQPDDDDGNPNEHRGAESEA) are disordered. A compositionally biased stretch (basic and acidic residues) spans 654–664 (PNEHRGAESEA).

As to quaternary structure, homodimer. Homotetramer. Binds RAB5A/Rab5 through an N-terminal domain. This interaction is essential for its recruitment to endosomal membranes as well as its role in cell proliferation. Binds subunits of the NuRD/MeCP1 complex. Interacts with FSHR; interaction is independent of follicle stimulating hormone stimulation. Interacts with APPL1; the interaction is decreased by adiponectin in a time-dependent manner. Forms a complex comprising APPL1, RUVBL2, CTNNB1, HDAC1 and HDAC2; interaction reduces interaction between CTNNB1, HDAC1, HDAC2 and RUVBL2 leading to the decrease of deacetylase activity of this complex; affects the recruitment of repressive complexes to the Wnt target genes. Interacts (via BAR domain) with TBC1D1; interaction is dependent of TBC1D1 phosphorylation at 'Ser-235'; interaction diminishes the phosphorylation of TBC1D1 at 'Thr-596', resulting in inhibition of SLC2A4 translocation and glucose uptake. Interacts with ANXA2; targets APPL2 to endosomes and acting in parallel to RAB5A. Interacts with RAB31 (in GTP-bound form); interaction contributes to or enhances recruitment of APPL2 to the phagosomes; interaction enhances Fc-gamma receptor-mediated phagocytosis through PI3K/Akt signaling in macrophages. Interacts with PIK3R1; forms a complex with PIK3R1 and APPL1. Interacts (via BAR domain) with ADIPOR1; hinders the accessibility of APPL1 to ADIPOR1; negatively regulates adiponectin signaling; ADIPOQ dissociates this interaction and facilitates the recruitment of APPL1 to ADIPOR1. Interacts (via BAR domain) with ADIPOR2; ADIPOQ dissociates this interaction. High levels in brain, heart, kidney and skeletal muscle.

It localises to the early endosome membrane. The protein localises to the nucleus. It is found in the cell membrane. Its subcellular location is the endosome membrane. The protein resides in the cytoplasm. It localises to the cytoplasmic vesicle. The protein localises to the phagosome. It is found in the cell projection. Its subcellular location is the ruffle. The protein resides in the ruffle membrane. It localises to the phagosome membrane. Its function is as follows. Multifunctional adapter protein that binds to various membrane receptors, nuclear factors and signaling proteins to regulate many processes, such as cell proliferation, immune response, endosomal trafficking and cell metabolism. Regulates signaling pathway leading to cell proliferation through interaction with RAB5A and subunits of the NuRD/MeCP1 complex. Plays a role in immune response by modulating phagocytosis, inflammatory and innate immune responses. In macrophages, enhances Fc-gamma receptor-mediated phagocytosis through interaction with RAB31 leading to activation of PI3K/Akt signaling. In response to LPS, modulates inflammatory responses by playing a key role on the regulation of TLR4 signaling and in the nuclear translocation of RELA/NF-kappa-B p65 and the secretion of pro- and anti-inflammatory cytokines. Also functions as a negative regulator of innate immune response via inhibition of AKT1 signaling pathway by forming a complex with APPL1 and PIK3R1. Plays a role in endosomal trafficking of TGFBR1 from the endosomes to the nucleus. Plays a role in cell metabolism by regulating adiponecting ans insulin signaling pathways and adaptative thermogenesis. In muscle, negatively regulates adiponectin-simulated glucose uptake and fatty acid oxidation by inhibiting adiponectin signaling pathway through APPL1 sequestration thereby antagonizing APPL1 action. In muscles, negatively regulates insulin-induced plasma membrane recruitment of GLUT4 and glucose uptake through interaction with TBC1D1. Plays a role in cold and diet-induced adaptive thermogenesis by activating ventromedial hypothalamus (VMH) neurons throught AMPK inhibition which enhances sympathetic outflow to subcutaneous white adipose tissue (sWAT), sWAT beiging and cold tolerance. Also plays a role in other signaling pathways namely Wnt/beta-catenin, HGF and glucocorticoid receptor signaling. Positive regulator of beta-catenin/TCF-dependent transcription through direct interaction with RUVBL2/reptin resulting in the relief of RUVBL2-mediated repression of beta-catenin/TCF target genes by modulating the interactions within the beta-catenin-reptin-HDAC complex. May affect adult neurogenesis in hippocampus and olfactory system via regulating the sensitivity of glucocorticoid receptor. Required for fibroblast migration through HGF cell signaling. The sequence is that of DCC-interacting protein 13-beta from Homo sapiens (Human).